Reading from the N-terminus, the 79-residue chain is Protein S100-G (79 aa).

Ser2 is subject to N-acetylserine. EF-hand domains are found at residues Ile13–Ser48 and Lys45–Gln79. Residues Gln26 and Glu31 each coordinate Ca(2+). The residue at position 47 (Ser47) is a Phosphoserine. 5 residues coordinate Ca(2+): Asp58, Asn60, Asp62, Glu64, and Glu69.

It belongs to the S-100 family.

The chain is Protein S100-G (S100G) from Equus caballus (Horse).